The following is a 377-amino-acid chain: MSFSFGFTSNDFDDDELVAQPETFVESSKENENTTAYINPLDSDFLSQAGVVQPNVEDLGTILESLKDVRLTFEEFQSPIYRKPLIKRELFDVKHQLMLETDAQSNNNSTELDILLGDTSEDLRKNIYEGGLKSWECSYDLVDLLSENVDRISNDIDAVVEIGCGTALPSEFLFRSALLRNDRSKGLKFVLTDYNASVLRLVTIPNLVITWAKTVLTKEQWYALQKDECEDIPINNEELLLTSKLLAAFYDDVQSRNISVTLISGSWGRKFSNLIHEVLSGSQKVLSLSSETIYQPDNLPVIAETILDIHNLPQTDVKTYVAAKDIYFGVGGSITEFEAYLDDKINSEHLPIHSERFKVNSGLKRSIICIETNKAIR.

The protein belongs to the methyltransferase superfamily. METTL18 family.

Its subcellular location is the cytoplasm. The protein localises to the nucleus. The enzyme catalyses L-histidyl-[protein] + S-adenosyl-L-methionine = N(tele)-methyl-L-histidyl-[protein] + S-adenosyl-L-homocysteine + H(+). Its function is as follows. Protein-histidine N-methyltransferase that mediates methylation of RPL3 at 'His-243'. Methylates ribosome-associated RPL3, but not free RPL3, thereby regulating 60S subunit assembly. In addition to RPL3, mediates His methylation of other proteins. This chain is Histidine protein methyltransferase 1, found in Saccharomyces cerevisiae (strain ATCC 204508 / S288c) (Baker's yeast).